The primary structure comprises 400 residues: Nicotinate phosphoribosyltransferase (400 aa).

Residue His-220 is modified to Phosphohistidine; by autocatalysis.

The protein belongs to the NAPRTase family. Post-translationally, transiently phosphorylated on a His residue during the reaction cycle. Phosphorylation strongly increases the affinity for substrates and increases the rate of nicotinate D-ribonucleotide production. Dephosphorylation regenerates the low-affinity form of the enzyme, leading to product release.

It catalyses the reaction nicotinate + 5-phospho-alpha-D-ribose 1-diphosphate + ATP + H2O = nicotinate beta-D-ribonucleotide + ADP + phosphate + diphosphate. It functions in the pathway cofactor biosynthesis; NAD(+) biosynthesis; nicotinate D-ribonucleotide from nicotinate: step 1/1. Catalyzes the synthesis of beta-nicotinate D-ribonucleotide from nicotinate and 5-phospho-D-ribose 1-phosphate at the expense of ATP. This chain is Nicotinate phosphoribosyltransferase, found in Salmonella agona (strain SL483).